Consider the following 505-residue polypeptide: L-carnitine/gamma-butyrobetaine antiporter (505 aa).

Transmembrane regions (helical) follow at residues 10-30, 51-71, 92-112, 143-163, 195-215, 231-251, 263-283, 316-336, 347-367, 403-423, 446-466, and 475-495; these read IEPK…WLTV, WGWA…WLVF, IFMM…SIEI, GPLP…FFFV, FYLV…TPLV, LDAI…ACGL, SYLS…SFIM, WTVF…IFLA, LCFG…TVLG, LSTA…VTLI, LLVR…LLAL, and AIIA…LSFI.

This sequence belongs to the BCCT transporter (TC 2.A.15) family. CaiT subfamily. Homotrimer.

The protein localises to the cell inner membrane. The catalysed reaction is 4-(trimethylamino)butanoate(in) + (R)-carnitine(out) = 4-(trimethylamino)butanoate(out) + (R)-carnitine(in). Its pathway is amine and polyamine metabolism; carnitine metabolism. Its function is as follows. Catalyzes the exchange of L-carnitine for gamma-butyrobetaine. This chain is L-carnitine/gamma-butyrobetaine antiporter, found in Salmonella agona (strain SL483).